The chain runs to 226 residues: Ribonuclease 3 (226 aa).

The 123-residue stretch at 6–128 folds into the RNase III domain; sequence INRLQRKLGY…LIGGVFLDSD (123 aa). E41 lines the Mg(2+) pocket. D45 is a catalytic residue. Mg(2+)-binding residues include D114 and E117. Residue E117 is part of the active site. The DRBM domain occupies 155–225; the sequence is DPKTRLQEYL…AEQALKQLEL (71 aa).

It belongs to the ribonuclease III family. In terms of assembly, homodimer. It depends on Mg(2+) as a cofactor.

It localises to the cytoplasm. The catalysed reaction is Endonucleolytic cleavage to 5'-phosphomonoester.. Functionally, digests double-stranded RNA. Involved in the processing of primary rRNA transcript to yield the immediate precursors to the large and small rRNAs (23S and 16S). Processes some mRNAs, and tRNAs when they are encoded in the rRNA operon. Processes pre-crRNA and tracrRNA of type II CRISPR loci if present in the organism. This chain is Ribonuclease 3, found in Yersinia pseudotuberculosis serotype O:1b (strain IP 31758).